Consider the following 346-residue polypeptide: N-acetyl-gamma-glutamyl-phosphate reductase (346 aa).

Cysteine 149 is a catalytic residue.

This sequence belongs to the NAGSA dehydrogenase family. Type 1 subfamily.

It localises to the cytoplasm. It catalyses the reaction N-acetyl-L-glutamate 5-semialdehyde + phosphate + NADP(+) = N-acetyl-L-glutamyl 5-phosphate + NADPH + H(+). Its pathway is amino-acid biosynthesis; L-arginine biosynthesis; N(2)-acetyl-L-ornithine from L-glutamate: step 3/4. Its function is as follows. Catalyzes the NADPH-dependent reduction of N-acetyl-5-glutamyl phosphate to yield N-acetyl-L-glutamate 5-semialdehyde. In Geotalea daltonii (strain DSM 22248 / JCM 15807 / FRC-32) (Geobacter daltonii), this protein is N-acetyl-gamma-glutamyl-phosphate reductase.